Reading from the N-terminus, the 272-residue chain is Shikimate dehydrogenase (NADP(+)) (272 aa).

Shikimate is bound by residues 14–16 and Thr61; that span reads SKS. Lys65 functions as the Proton acceptor in the catalytic mechanism. Residue Glu77 participates in NADP(+) binding. 2 residues coordinate shikimate: Asn86 and Asp102. NADP(+) is bound by residues 126–130, 149–154, and Met213; these read GAGGA and NRTASR. A shikimate-binding site is contributed by Tyr215. Gly237 lines the NADP(+) pocket.

This sequence belongs to the shikimate dehydrogenase family. In terms of assembly, homodimer.

It carries out the reaction shikimate + NADP(+) = 3-dehydroshikimate + NADPH + H(+). Its pathway is metabolic intermediate biosynthesis; chorismate biosynthesis; chorismate from D-erythrose 4-phosphate and phosphoenolpyruvate: step 4/7. Its function is as follows. Involved in the biosynthesis of the chorismate, which leads to the biosynthesis of aromatic amino acids. Catalyzes the reversible NADPH linked reduction of 3-dehydroshikimate (DHSA) to yield shikimate (SA). In Salmonella paratyphi A (strain ATCC 9150 / SARB42), this protein is Shikimate dehydrogenase (NADP(+)).